We begin with the raw amino-acid sequence, 318 residues long: NAC domain-containing protein 68 (318 aa).

Residues 21–175 enclose the NAC domain; it reads LPPGFRFHPT…EWVLCRLYNK (155 aa).

In terms of tissue distribution, expressed in stems, leaf blades and callus. Weakly expressed in developing flowers.

Its subcellular location is the nucleus. Probable transcription factor involved in stress response. The polypeptide is NAC domain-containing protein 68 (Oryza sativa subsp. japonica (Rice)).